The sequence spans 669 residues: PDF receptor (669 aa).

Over 1–244 (MTLLSNILDC…DIARRTRTLE (244 aa)) the chain is Extracellular. The segment at 24-52 (RQSGSSGPSPSAPTAGTFESKSMLEPTSS) is disordered. The span at 26–40 (SGSSGPSPSAPTAGT) shows a compositional bias: low complexity. N-linked (GlcNAc...) asparagine glycans are attached at residues Asn111, Asn117, Asn130, Asn137, Asn148, and Asn198. A helical transmembrane segment spans residues 245–265 (IVGLCLSLFALIVSLLIFCTF). The Cytoplasmic segment spans residues 266–274 (RSLRNNRTK). Residues 275 to 295 (IHKNLFVAMVLQVIIRLTLYL) traverse the membrane as a helical segment. The Extracellular segment spans residues 296–334 (DQFRRGNKEAATNTSLSVIENTPYLCEASYVLLEYARTA). Asn308 is a glycosylation site (N-linked (GlcNAc...) asparagine). A helical transmembrane segment spans residues 335–355 (MFMWMFIEGLYLHNMVTVAVF). The Cytoplasmic portion of the chain corresponds to 356–366 (QGSFPLKFFSR). A helical membrane pass occupies residues 367–387 (LGWCVPILMTTVWARCTVMYM). The Extracellular segment spans residues 388-411 (DTSLGECLWNYNLTPYYWILEGPR). A helical transmembrane segment spans residues 412–432 (LAVILLNFCFLVNIIRVLVMK). Residues 433–449 (LRQSQASDIEQTRKAVR) lie on the Cytoplasmic side of the membrane. Residues 450–470 (AAIVLLPLLGITNLLHQLAPL) form a helical membrane-spanning segment. Residues 471–480 (KTATNFAVWS) are Extracellular-facing. A helical transmembrane segment spans residues 481–501 (YGTHFLTSFQGFFIALIYCFL). At 502-669 (NGEVRAVLLK…ESVVFELSEQ (168 aa)) the chain is on the cytoplasmic side. Disordered stretches follow at residues 536–573 (AYNT…KPSS) and 590–614 (PRLQ…AEPD). Residues 595-609 (KAREKGKDRVEKTDA) are compositionally biased toward basic and acidic residues.

It belongs to the G-protein coupled receptor 2 family. As to expression, mainly present in clock neurons of the brain. Localizes in all 4 s-LNv neurons, 1 LNd neuron, 7 DN1 neurons, and 1 DN3 neuron. In addition to the clock neurons, it is also present in approximately 13 pairs of neurons along the ventral nerve cord in third instar larvae, which do not overlap with dopaminergic or serotonergic neurons. Not present in DN2 neurons (at protein level).

It localises to the cell membrane. In terms of biological role, receptor for PDF, a neuropeptide controlling circadian behavioral rhythms. Probably regulates circadian behavioral rhythms through coordination of activities of clock neurons. PDF-binding results in the elevation of cAMP synthesis. Plays a role in sleep regulation and regulates the state transition from sleep to wake. This Drosophila melanogaster (Fruit fly) protein is PDF receptor.